A 321-amino-acid polypeptide reads, in one-letter code: tRNA uridine(34) hydroxylase (321 aa).

The Rhodanese domain occupies 123-217 (SDPDVTVIDT…YLEEVPEGNS (95 aa)). Residue Cys-177 is the Cysteine persulfide intermediate of the active site. The span at 294–308 (RKGELHIGDRADIAK) shows a compositional bias: basic and acidic residues. The segment at 294-321 (RKGELHIGDRADIAKSRTTQGAPSADGE) is disordered.

Belongs to the TrhO family.

It carries out the reaction uridine(34) in tRNA + AH2 + O2 = 5-hydroxyuridine(34) in tRNA + A + H2O. Functionally, catalyzes oxygen-dependent 5-hydroxyuridine (ho5U) modification at position 34 in tRNAs. This is tRNA uridine(34) hydroxylase from Teredinibacter turnerae (strain ATCC 39867 / T7901).